Here is a 127-residue protein sequence, read N- to C-terminus: Ribosome-binding factor A (127 aa).

Belongs to the RbfA family. As to quaternary structure, monomer. Binds 30S ribosomal subunits, but not 50S ribosomal subunits or 70S ribosomes.

It localises to the cytoplasm. Its function is as follows. One of several proteins that assist in the late maturation steps of the functional core of the 30S ribosomal subunit. Associates with free 30S ribosomal subunits (but not with 30S subunits that are part of 70S ribosomes or polysomes). Required for efficient processing of 16S rRNA. May interact with the 5'-terminal helix region of 16S rRNA. This is Ribosome-binding factor A from Chloroflexus aurantiacus (strain ATCC 29366 / DSM 635 / J-10-fl).